A 208-amino-acid polypeptide reads, in one-letter code: Thymidylate kinase (208 aa).

7–14 (GIDGAGKT) lines the ATP pocket.

It belongs to the thymidylate kinase family.

The catalysed reaction is dTMP + ATP = dTDP + ADP. Functionally, phosphorylation of dTMP to form dTDP in both de novo and salvage pathways of dTTP synthesis. This is Thymidylate kinase (tmk) from Xylella fastidiosa (strain 9a5c).